The sequence spans 1461 residues: Calmodulin-regulated spectrin-associated protein 2 (1461 aa).

In terms of domain architecture, Calponin-homology (CH) spans 211 to 324 (PGGQKARYRK…FMAELFWWFE (114 aa)). The segment at 361-389 (RDSSSSSDFSSRYTRPQTHSSASGGIRRS) is disordered. Low complexity-rich tracts occupy residues 362 to 371 (DSSSSSDFSS) and 380 to 389 (SSASGGIRRS). S391 and S393 each carry phosphoserine. Position 401 is a phosphothreonine (T401). A phosphoserine mark is found at S439, S572, S573, S585, and S647. 2 disordered regions span residues 573–613 (SPDN…EDSS) and 639–704 (ASNP…GSEL). The residue at position 652 (T652) is a Phosphothreonine. S654 bears the Phosphoserine mark. Low complexity predominate over residues 654–673 (STKSQPGSSASSSSGVKMTS). Residues 677 to 687 (QKFRKLNHTDG) are compositionally biased toward basic and acidic residues. Residues 730 to 767 (LLASEMVHLRMRLEEKRRAIEAQKKKMEAAFTKQRQKM) adopt a coiled-coil conformation. The segment covering 787–826 (REEAAGAEDEKVYTDRAKERESQKMDGQRSKSLADIKESM) has biased composition (basic and acidic residues). A disordered region spans residues 787 to 855 (REEAAGAEDE…QWNLTSPSEE (69 aa)). S836 carries the post-translational modification Phosphoserine. Residues 861–900 (EILEYTKSIEKLNSSLHFLQQEMQRLSLQQEMLMQMREQQ) adopt a coiled-coil conformation. The interval 896-1007 (MREQQAWVIS…IQTRSFVCFG (112 aa)) is MBD region. Residues S905 and S910 each carry the phosphoserine modification. Disordered regions lie at residues 921-992 (RQAG…RRFS), 1004-1044 (VCFG…GEKE), 1069-1090 (NEDQ…PTAP), 1102-1124 (DLKP…DKEQ), and 1163-1321 (KETQ…EYTG). Low complexity predominate over residues 926–937 (SSAAAPFSSDSP). The span at 943–962 (SPQSSTRKSASFSVKNQRTP) shows a compositional bias: polar residues. 3 positions are modified to phosphothreonine: T970, T975, and T977. A phosphoserine mark is found at S981 and S992. Over residues 1011–1028 (EPQKEPKQKEEIKKEPSE) the composition is skewed to basic and acidic residues. The span at 1077 to 1089 (TEPPPKPVFPPTA) shows a compositional bias: pro residues. Basic and acidic residues-rich tracts occupy residues 1104 to 1124 (KPPE…DKEQ) and 1163 to 1224 (KETQ…DTVI). At S1120 the chain carries Phosphoserine. A coiled-coil region spans residues 1138-1210 (KDDQKAENDM…REFIRQEYMR (73 aa)). Residues 1259-1271 (SSLSLASLNTGDS) show a composition bias toward polar residues. S1285, S1291, and S1293 each carry phosphoserine. A compositionally biased stretch (polar residues) spans 1306–1318 (NASTTSSVASGTE). Positions 1321–1455 (GPKLYKEPSA…QTKRPVTPKK (135 aa)) constitute a CKK domain.

This sequence belongs to the CAMSAP1 family. In terms of assembly, interacts with CAMSAP3. Interacts with KATNA1 and KATNB1; leading to regulate the length of CAMSAP2-decorated microtubule stretches. Interacts with a complex formed by AKAP9 and PDE4DIP isoform 2/MMG8/SMYLE, which recruits CAMSAP2 to the Golgi. Interacts with MAPRE1/EB1.

Its subcellular location is the cytoplasm. The protein localises to the cytoskeleton. It is found in the golgi apparatus. The protein resides in the cilium basal body. Key microtubule-organizing protein that specifically binds the minus-end of non-centrosomal microtubules and regulates their dynamics and organization. Specifically recognizes growing microtubule minus-ends and autonomously decorates and stabilizes microtubule lattice formed by microtubule minus-end polymerization. Acts on free microtubule minus-ends that are not capped by microtubule-nucleating proteins or other factors and protects microtubule minus-ends from depolymerization. In addition, it also reduces the velocity of microtubule polymerization. Through the microtubule cytoskeleton, also regulates the organization of cellular organelles including the Golgi and the early endosomes. Essential for the tethering, but not for nucleation of non-centrosomal microtubules at the Golgi: together with Golgi-associated proteins AKAP9 and PDE4DIP, required to tether non-centrosomal minus-end microtubules to the Golgi, an important step for polarized cell movement. Also acts as a regulator of neuronal polarity and development: localizes to non-centrosomal microtubule minus-ends in neurons and stabilizes non-centrosomal microtubules, which is required for neuronal polarity, axon specification and dendritic branch formation. Through the microtubule cytoskeleton, regulates the autophagosome transport. The polypeptide is Calmodulin-regulated spectrin-associated protein 2 (Mus musculus (Mouse)).